Reading from the N-terminus, the 644-residue chain is MPSKAENLRPSEPAPQPPEGRTLQGQLPGAPLAQRAGSPPDVPGSESPALACSTPATPSGEDPPARAAPIAPRPPARPRLERALSLDDKGWRRRRFRGSQEDLEARNGTSPSRGSVQSEGPGAPAHSCSPPCLSTSLQEIPKSRGVLSSERGSPSSGGNPLSGVASSSPNLPHRDAAVAGSSPRLPSLLPPRPPPALSLDIASDSLRTANKVDSDLADYKLRAQPLLVRAHSSLGPGRPRSPLACDDCSLRSAKSSFSLLAPIRSKDVRSRSYLEGSLLASGALLGADELARYFPDRNVALFVATWNMQGQKELPPSLDEFLLPAEADYAQDLYVIGVQEGCSDRREWETRLQETLGPHYVLLSSAAHGVLYMSLFIRRDLIWFCSEVECSTVTTRIVSQIKTKGALGISFTFFGTSFLFITSHFTSGDGKVAERLLDYTRTVQALALPRNVPDTNPYRSSAADVTTRFDEVFWFGDFNFRLSGGRTVVDALLCQGLVVDVPALLQHDQLIREMRKGSIFKGFQEPDIHFLPSYKFDIGKDTYDSTSKQRTPSYTDRVLYRSRHKGDICPVSYSSCPGIKTSDHRPVYGLFRVKVRPGRDNIPLAAGKFDRELYLLGIKRRISKEIQRQQALQSQNSSTICSVS.

Positions 1-193 are disordered; the sequence is MPSKAENLRP…RLPSLLPPRP (193 aa). 8 repeat units span residues 10–13, 15–18, 28–31, 39–42, 55–58, 69–71, 72–74, and 75–78. Positions 10-242 are 13 X 4 AA repeats of P-X-X-P; sequence PSEPAPQPPE…SLGPGRPRSP (233 aa). Residues 78–90 show a composition bias toward basic and acidic residues; the sequence is PRLERALSLDDKG. Serine 99 is subject to Phosphoserine. Residues 107-118 show a composition bias toward polar residues; sequence NGTSPSRGSVQS. Residues 121 to 124 form repeat 9; it reads PGAP. Residues 152-163 are compositionally biased toward low complexity; that stretch reads GSPSSGGNPLSG. 4 tandem repeats follow at residues 169–172, 183–185, 190–193, and 236–239. Residues serine 241 and serine 256 each carry the phosphoserine modification. Cysteine 641 bears the Cysteine methyl ester mark. Cysteine 641 carries S-farnesyl cysteine lipidation. A propeptide spans 642-644 (removed in mature form); sequence SVS.

This sequence belongs to the inositol polyphosphate 5-phosphatase family. In terms of assembly, interacts (when prenylated) with PDE6D; this is important for normal location in cilia.

The protein resides in the cytoplasm. It is found in the cytoskeleton. The protein localises to the cilium axoneme. It localises to the golgi apparatus. Its subcellular location is the golgi stack membrane. The protein resides in the cell membrane. It is found in the cell projection. The protein localises to the ruffle. It localises to the nucleus. The catalysed reaction is a 1,2-diacyl-sn-glycero-3-phospho-(1D-myo-inositol-4,5-bisphosphate) + H2O = a 1,2-diacyl-sn-glycero-3-phospho-(1D-myo-inositol 4-phosphate) + phosphate. It catalyses the reaction a 1,2-diacyl-sn-glycero-3-phospho-(1D-myo-inositol-3,4,5-trisphosphate) + H2O = a 1,2-diacyl-sn-glycero-3-phospho-(1D-myo-inositol-3,4-bisphosphate) + phosphate. The enzyme catalyses a 1,2-diacyl-sn-glycero-3-phospho-(1D-myo-inositol-3,5-bisphosphate) + H2O = a 1,2-diacyl-sn-glycero-3-phospho-(1D-myo-inositol-3-phosphate) + phosphate. Functionally, phosphatidylinositol (PtdIns) phosphatase that specifically hydrolyzes the 5-phosphate of phosphatidylinositol-3,4,5-trisphosphate (PtdIns(3,4,5)P3), phosphatidylinositol 4,5-bisphosphate(PtdIns(4,5)P2) and phosphatidylinositol 3,5-bisphosphate (PtdIns(3,5)P2). Specific for lipid substrates, inactive towards water soluble inositol phosphates. Plays an essential role in the primary cilium by controlling ciliary growth and phosphoinositide 3-kinase (PI3K) signaling and stability. The chain is Phosphatidylinositol polyphosphate 5-phosphatase type IV (INPP5E) from Pan troglodytes (Chimpanzee).